Here is a 318-residue protein sequence, read N- to C-terminus: Trans-prenyltransferase (318 aa).

The chain crosses the membrane as a helical span at residues Met1–Thr21. Isopentenyl diphosphate contacts are provided by Lys85, Arg88, and His122. Residues Asp129 and Asp135 each contribute to the Mg(2+) site. Residue Arg140 participates in dimethylallyl diphosphate binding. Arg141 serves as a coordination point for isopentenyl diphosphate. Dimethylallyl diphosphate contacts are provided by Lys216, Thr217, and Gln254.

The protein belongs to the FPP/GGPP synthase family. Asfivirus trans-prenyltransferase subfamily. The cofactor is Mg(2+).

It is found in the host endoplasmic reticulum. It localises to the host membrane. The catalysed reaction is isopentenyl diphosphate + dimethylallyl diphosphate = (2E)-geranyl diphosphate + diphosphate. It catalyses the reaction isopentenyl diphosphate + (2E)-geranyl diphosphate = (2E,6E)-farnesyl diphosphate + diphosphate. It carries out the reaction isopentenyl diphosphate + (2E,6E)-farnesyl diphosphate = (2E,6E,10E)-geranylgeranyl diphosphate + diphosphate. The enzyme catalyses isopentenyl diphosphate + (2E,6E,10E)-geranylgeranyl diphosphate = (2E,6E,10E,14E)-geranylfarnesyl diphosphate + diphosphate. It functions in the pathway isoprenoid biosynthesis; farnesyl diphosphate biosynthesis; farnesyl diphosphate from geranyl diphosphate and isopentenyl diphosphate: step 1/1. The protein operates within isoprenoid biosynthesis; geranyl diphosphate biosynthesis; geranyl diphosphate from dimethylallyl diphosphate and isopentenyl diphosphate: step 1/1. It participates in isoprenoid biosynthesis; geranylgeranyl diphosphate biosynthesis; geranylgeranyl diphosphate from farnesyl diphosphate and isopentenyl diphosphate: step 1/1. Trans-prenyltransferase that catalyzes the sequential condensation of isopentenyl diphosphate (IPP) with different allylic diphosphates, such as dimethylallyl diphosphate (DMAPP), geranyl diphosphate (GPP), farnesyl diphosphate (FPP) and geranylgeranyl diphosphate (GGPP), farnesyl diphosphate being the best allylic substrate. The chain is Trans-prenyltransferase from African swine fever virus (isolate Tick/South Africa/Pretoriuskop Pr4/1996) (ASFV).